Reading from the N-terminus, the 273-residue chain is Ribosomal RNA small subunit methyltransferase I (273 aa).

Belongs to the methyltransferase superfamily. RsmI family.

It is found in the cytoplasm. It carries out the reaction cytidine(1402) in 16S rRNA + S-adenosyl-L-methionine = 2'-O-methylcytidine(1402) in 16S rRNA + S-adenosyl-L-homocysteine + H(+). In terms of biological role, catalyzes the 2'-O-methylation of the ribose of cytidine 1402 (C1402) in 16S rRNA. This chain is Ribosomal RNA small subunit methyltransferase I, found in Xylella fastidiosa (strain 9a5c).